We begin with the raw amino-acid sequence, 150 residues long: Large ribosomal subunit protein bL9 (150 aa).

The protein belongs to the bacterial ribosomal protein bL9 family.

Its function is as follows. Binds to the 23S rRNA. The chain is Large ribosomal subunit protein bL9 from Albidiferax ferrireducens (strain ATCC BAA-621 / DSM 15236 / T118) (Rhodoferax ferrireducens).